The following is a 297-amino-acid chain: D-alanine--D-alanine ligase (297 aa).

The 191-residue stretch at 103–293 (KEILMHHRMP…FDSFVKSILE (191 aa)) folds into the ATP-grasp domain. 129 to 180 (ISFPVAVKPSSGGSSIATFKVKSLEELENAYQQASKHGEVMIEQWVTGKEIT) serves as a coordination point for ATP. The Mg(2+) site is built by aspartate 247, glutamate 260, and asparagine 262.

It belongs to the D-alanine--D-alanine ligase family. Mg(2+) is required as a cofactor. The cofactor is Mn(2+).

Its subcellular location is the cytoplasm. The enzyme catalyses 2 D-alanine + ATP = D-alanyl-D-alanine + ADP + phosphate + H(+). It functions in the pathway cell wall biogenesis; peptidoglycan biosynthesis. Cell wall formation. This chain is D-alanine--D-alanine ligase, found in Francisella philomiragia subsp. philomiragia (strain ATCC 25017 / CCUG 19701 / FSC 153 / O#319-036).